The sequence spans 479 residues: ESX-1 secretion system ATPase EccB1 (479 aa).

The Cytoplasmic portion of the chain corresponds to 1-44; it reads MAGFRLTTKVQVSGWRFLLRRVEHAIVRRDTRMFDDPLQFYSRA. Residues 45–65 form a helical membrane-spanning segment; it reads VFAGVVVSVLICLGAALMAYF. Residues 66-479 are Periplasmic-facing; the sequence is KPLGKQGSDQ…NPRKVASGEG (414 aa). A disulfide bridge links Cys152 with Cys347.

This sequence belongs to the EccB family. Part of the ESX-1 / type VII secretion system (T7SS), which is composed of cytosolic and membrane components. The ESX-1 membrane complex is composed of EccB1, EccCa1, EccCb1, EccD1 and EccE1.

It is found in the cell inner membrane. An ATPase. Part of the ESX-1 / type VII specialized secretion system (T7SS), which exports several proteins including EsxA and EsxB. Plays a role in DNA conjugation, in both donor and recipient strains. The sequence is that of ESX-1 secretion system ATPase EccB1 from Mycolicibacterium smegmatis (strain MKD8) (Mycobacterium smegmatis).